Reading from the N-terminus, the 435-residue chain is GTPase Obg (435 aa).

The Obg domain maps to 6–164; that stretch reads ADFVDRVKIF…RWLELELKIL (159 aa). One can recognise an OBG-type G domain in the interval 165–335; that stretch reads ADVGLVGYPN…LVSKLASIVR (171 aa). GTP-binding positions include 171-178, 196-200, 217-220, 287-290, and 316-318; these read GYPNVGKS, FTTLI, DIPG, NKID, and SAL. Positions 178 and 198 each coordinate Mg(2+). The OCT domain maps to 357 to 435; it reads RRLPEKFHLE…IGDFEFEYRE (79 aa).

This sequence belongs to the TRAFAC class OBG-HflX-like GTPase superfamily. OBG GTPase family. As to quaternary structure, monomer. It depends on Mg(2+) as a cofactor.

The protein localises to the cytoplasm. Functionally, an essential GTPase which binds GTP, GDP and possibly (p)ppGpp with moderate affinity, with high nucleotide exchange rates and a fairly low GTP hydrolysis rate. Plays a role in control of the cell cycle, stress response, ribosome biogenesis and in those bacteria that undergo differentiation, in morphogenesis control. The polypeptide is GTPase Obg (Thermotoga sp. (strain RQ2)).